Reading from the N-terminus, the 251-residue chain is 5'-nucleotidase SurE (251 aa).

A divalent metal cation is bound by residues Asp-8, Asp-9, Ser-40, and Asn-95.

The protein belongs to the SurE nucleotidase family. The cofactor is a divalent metal cation.

It localises to the cytoplasm. It carries out the reaction a ribonucleoside 5'-phosphate + H2O = a ribonucleoside + phosphate. Nucleotidase that shows phosphatase activity on nucleoside 5'-monophosphates. The sequence is that of 5'-nucleotidase SurE from Desulfitobacterium hafniense (strain DSM 10664 / DCB-2).